The sequence spans 590 residues: Threonine dehydratase biosynthetic, chloroplastic (590 aa).

The N-terminal 44 residues, 1 to 44, are a transit peptide targeting the chloroplast; that stretch reads MLSTSTTNSSILPFRSRASSSTFIARPPANFNSIFTTSVRVFPI. Residue Lys139 is modified to N6-(pyridoxal phosphate)lysine. 2 ACT-like domains span residues 416-488 and 509-580; these read ALLG…NISH and EVFV…IDQY.

It belongs to the serine/threonine dehydratase family. The cofactor is pyridoxal 5'-phosphate. In terms of tissue distribution, found at higher levels in flowers than in other organs.

The protein resides in the plastid. It localises to the chloroplast. The enzyme catalyses L-threonine = 2-oxobutanoate + NH4(+). Its pathway is amino-acid biosynthesis; L-isoleucine biosynthesis; 2-oxobutanoate from L-threonine: step 1/1. Its activity is regulated as follows. Allosterically inhibited by isoleucine. The polypeptide is Threonine dehydratase biosynthetic, chloroplastic (Cicer arietinum (Chickpea)).